The primary structure comprises 305 residues: Syntaxin-112 (305 aa).

Methionine 1 bears the N-acetylmethionine mark. Residues 52–119 (QEIETIKTLI…TLIETLEKRN (68 aa)) adopt a coiled-coil conformation. The t-SNARE coiled-coil homology domain maps to 210-272 (DLKTKERHEA…SGGTNSLYYA (63 aa)).

This sequence belongs to the syntaxin family. In terms of assembly, part of the t-SNARE complex.

Vesicle trafficking protein that functions in the secretory pathway. The polypeptide is Syntaxin-112 (SYP112) (Arabidopsis thaliana (Mouse-ear cress)).